A 542-amino-acid chain; its full sequence is Calcium/calmodulin-dependent protein kinase type II subunit beta (542 aa).

One can recognise a Protein kinase domain in the interval 14-272 (YQLYEDIGKG…AHEALKHPWV (259 aa)). Y17 bears the Phosphotyrosine mark. Residues 20 to 28 (IGKGAFSVV) and K43 contribute to the ATP site. Catalysis depends on D136, which acts as the Proton acceptor. Positions 283-292 (HRQETVECLK) are autoinhibitory domain. At T287 the chain carries Phosphothreonine; by autocatalysis. The tract at residues 291-301 (LKKFNARRKLK) is calmodulin-binding. Residues T306 and T307 each carry the phosphothreonine; by autocatalysis modification. Residues 349 to 407 (ADGVKPQTNSTKNSAAATSPKGTLPPAALEPQTTVIHNPVDGIKESSDSTHTTIEDEDT) are disordered. A compositionally biased stretch (polar residues) spans 354 to 369 (PQTNSTKNSAAATSPK). Phosphoserine is present on residues S367, S394, and S397. 2 positions are modified to phosphothreonine: T400 and T401.

Belongs to the protein kinase superfamily. CAMK Ser/Thr protein kinase family. CaMK subfamily. In terms of assembly, CAMK2 is composed of 4 different chains: alpha (CAMK2A), beta (CAMK2B), gamma (CAMK2G), and delta (CAMK2D). The different isoforms assemble into homo- or heteromultimeric holoenzymes composed of 12 subunits with two hexameric rings stacked one on top of the other. Interacts with SYNGAP1, CAMK2N2 and MPDZ. Interacts with FOXO3. Interacts (when in a kinase inactive state not associated with calmodulin) with ARC; leading to target ARC to inactive synapses. Interacts with CAMK2N1; this interaction requires CAMK2B activation by Ca(2+). Post-translationally, autophosphorylation of Thr-287 following activation by Ca(2+)/calmodulin. Phosphorylation of Thr-287 locks the kinase into an activated state.

The protein resides in the cytoplasm. It localises to the cytoskeleton. The protein localises to the microtubule organizing center. It is found in the centrosome. Its subcellular location is the sarcoplasmic reticulum membrane. The protein resides in the synapse. The catalysed reaction is L-seryl-[protein] + ATP = O-phospho-L-seryl-[protein] + ADP + H(+). It catalyses the reaction L-threonyl-[protein] + ATP = O-phospho-L-threonyl-[protein] + ADP + H(+). With respect to regulation, activated by Ca(2+)/calmodulin. Binding of calmodulin results in conformational change that relieves intrasteric autoinhibition and allows autophosphorylation of Thr-287 which turns the kinase in a constitutively active form and confers to the kinase a Ca(2+)-independent activity. Functionally, calcium/calmodulin-dependent protein kinase that functions autonomously after Ca(2+)/calmodulin-binding and autophosphorylation, and is involved in dendritic spine and synapse formation, neuronal plasticity and regulation of sarcoplasmic reticulum Ca(2+) transport in skeletal muscle. In neurons, plays an essential structural role in the reorganization of the actin cytoskeleton during plasticity by binding and bundling actin filaments in a kinase-independent manner. This structural function is required for correct targeting of CaMK2A, which acts downstream of NMDAR to promote dendritic spine and synapse formation and maintain synaptic plasticity which enables long-term potentiation (LTP) and hippocampus-dependent learning. In developing hippocampal neurons, promotes arborization of the dendritic tree and in mature neurons, promotes dendritic remodeling. Also regulates the migration of developing neurons. Participates in the modulation of skeletal muscle function in response to exercise. In slow-twitch muscles, is involved in regulation of sarcoplasmic reticulum (SR) Ca(2+) transport and in fast-twitch muscle participates in the control of Ca(2+) release from the SR through phosphorylation of triadin, a ryanodine receptor-coupling factor, and phospholamban (PLN/PLB), an endogenous inhibitor of SERCA2A/ATP2A2. In response to interferon-gamma (IFN-gamma) stimulation, catalyzes phosphorylation of STAT1, stimulating the JAK-STAT signaling pathway. Phosphorylates reticulophagy regulator RETREG1 at 'Ser-147' under endoplasmic reticulum stress conditions which enhances RETREG1 oligomerization and its membrane scission and reticulophagy activity. This Bos taurus (Bovine) protein is Calcium/calmodulin-dependent protein kinase type II subunit beta (CAMK2B).